The sequence spans 136 residues: Large ribosomal subunit protein eL27 (136 aa).

A KOW domain is found at 5–40 (MKPGKVVMVLAGRYAGRKAVIVKNIDDGTADRPYSH).

Belongs to the eukaryotic ribosomal protein eL27 family. As to quaternary structure, component of the large ribosomal subunit.

The protein localises to the cytoplasm. It localises to the cytosol. It is found in the rough endoplasmic reticulum. In terms of biological role, component of the large ribosomal subunit. The chain is Large ribosomal subunit protein eL27 (rpl27) from Ictalurus punctatus (Channel catfish).